A 717-amino-acid polypeptide reads, in one-letter code: Catalase-peroxidase (717 aa).

Residues 1-20 (MSGKCPVMHGGNTSTGTSNK) form a disordered region. Polar residues predominate over residues 11 to 20 (GNTSTGTSNK). A cross-link (tryptophyl-tyrosyl-methioninium (Trp-Tyr) (with M-245)) is located at residues 91-219 (WHSAGSYRLA…LAAVQMGLIY (129 aa)). Histidine 92 acts as the Proton acceptor in catalysis. The segment at residues 219 to 245 (YVNPEGVNGQPDPQKTAEQVRETFARM) is a cross-link (tryptophyl-tyrosyl-methioninium (Tyr-Met) (with W-91)). Heme b is bound at residue histidine 260.

This sequence belongs to the peroxidase family. Peroxidase/catalase subfamily. Homodimer or homotetramer. It depends on heme b as a cofactor. Formation of the three residue Trp-Tyr-Met cross-link is important for the catalase, but not the peroxidase activity of the enzyme.

It carries out the reaction H2O2 + AH2 = A + 2 H2O. The enzyme catalyses 2 H2O2 = O2 + 2 H2O. Bifunctional enzyme with both catalase and broad-spectrum peroxidase activity. This Chromohalobacter salexigens (strain ATCC BAA-138 / DSM 3043 / CIP 106854 / NCIMB 13768 / 1H11) protein is Catalase-peroxidase.